The chain runs to 226 residues: Thymidylate kinase (226 aa).

Position 9–16 (glycine 9–serine 16) interacts with ATP.

It belongs to the thymidylate kinase family.

It carries out the reaction dTMP + ATP = dTDP + ADP. Its function is as follows. Phosphorylation of dTMP to form dTDP in both de novo and salvage pathways of dTTP synthesis. The sequence is that of Thymidylate kinase from Roseiflexus sp. (strain RS-1).